The following is a 448-amino-acid chain: Trk system potassium uptake protein TrkA homolog 1 (448 aa).

Positions 1-124 (MKAVIIGAGE…RAQVGVDLMI (124 aa)) constitute an RCK N-terminal 1 domain. NAD(+) contacts are provided by residues 7–11 (GAGEV), D29, 70–71 (TG), and R101. The RCK C-terminal 1 domain occupies 144 to 225 (IDAEMFAEGK…MEDLESVFGS (82 aa)). An RCK N-terminal 2 domain is found at 230-348 (RTRILLIGCG…FEMVGIDMAV (119 aa)). An NAD(+)-binding site is contributed by 232-262 (RILLIGCGIVGMYLAKLIDKEENADLRIIEH). Positions 368–448 (QTLTTIEGER…AASEVEKYFK (81 aa)) constitute an RCK C-terminal 2 domain.

In terms of biological role, part of a potassium transport system. This is Trk system potassium uptake protein TrkA homolog 1 (trkA1) from Methanosarcina mazei (strain ATCC BAA-159 / DSM 3647 / Goe1 / Go1 / JCM 11833 / OCM 88) (Methanosarcina frisia).